Here is a 215-residue protein sequence, read N- to C-terminus: MLDREGFRPNVGIILLNARNEVFWGKRLREHSWQFPQGGIKYGETPMQAMYRELHEETGLLPEHVKIIGRTRDWLRYEVPDKFIKREVRGHYRGQKQIWFLLRMLGRDCDICLRATDHPEFDAWRWNEYWVPLDAVIEFKRDVYQLALTELSRFLRRPAQRADKPRGPRLPRYPRVIAAQPAETLTIVDTSVVCSEVEVEASTLDEMPPRVIVGK.

A Nudix hydrolase domain is found at 6 to 149 (GFRPNVGIIL…KRDVYQLALT (144 aa)). A Nudix box motif is present at residues 38–59 (GGIKYGETPMQAMYRELHEETG).

Belongs to the Nudix hydrolase family. RppH subfamily. It depends on a divalent metal cation as a cofactor.

In terms of biological role, accelerates the degradation of transcripts by removing pyrophosphate from the 5'-end of triphosphorylated RNA, leading to a more labile monophosphorylated state that can stimulate subsequent ribonuclease cleavage. The chain is RNA pyrophosphohydrolase from Burkholderia multivorans (strain ATCC 17616 / 249).